A 333-amino-acid chain; its full sequence is Chitinase-like protein 2 (333 aa).

Residues 1-27 (MVSKPLFSLLLLTVALVVFQTGTLVNA) form the signal peptide. A disulfide bond links Cys50 and Cys56. Asn65 carries an N-linked (GlcNAc...) asparagine glycan. A disulfide bond links Cys165 and Cys175. Residues Asn216 and Asn252 are each glycosylated (N-linked (GlcNAc...) asparagine). Cys275 and Cys313 are disulfide-bonded. The segment at 307-333 (PHEKLSCADQEPFSSSSSAPPSSGSSS) is disordered. Over residues 320-333 (SSSSSAPPSSGSSS) the composition is skewed to low complexity.

This sequence belongs to the glycosyl hydrolase 19 family. As to expression, mostly expressed in stems, especially in xylem and interfascicular fibers.

It is found in the secreted. Its function is as follows. No chitinase activity. Required for proper cell wall biosynthesis in etiolated seedlings. Prevents lignin accumulation in hypocotyls. The chain is Chitinase-like protein 2 (CTL2) from Arabidopsis thaliana (Mouse-ear cress).